A 67-amino-acid polypeptide reads, in one-letter code: Potassium channel toxin alpha-KTx (67 aa).

Positions Met-1–Ala-25 are cleaved as a signal peptide. The propeptide occupies Asp-26–Arg-31. Cystine bridges form between Cys-35–Cys-54, Cys-40–Cys-59, Cys-44–Cys-61, and Cys-49–Cys-64.

It belongs to the short scorpion toxin superfamily. Potassium channel inhibitor family. In terms of tissue distribution, expressed by the venom gland.

The protein resides in the secreted. Its function is as follows. Blocks Kv1.1/KCNA1, Kv1.2/KCNA2 and Kv1.3/KCNA3 voltage-gated potassium channels. This chain is Potassium channel toxin alpha-KTx, found in Hoffmannihadrurus gertschi (Scorpion).